The primary structure comprises 563 residues: Efflux pump FUS6 (563 aa).

Positions 1-30 are disordered; that stretch reads MPQPDKMAAVNNAMPQPAPEKSLSSDPQPE. A run of 5 helical transmembrane segments spans residues 39–59, 75–95, 105–125, 138–158, and 167–187; these read WLIF…TSII, LYVW…PIFA, SLTL…GGAH, GIGG…MVSI, and IIGG…GAFA. An N-linked (GlcNAc...) asparagine glycan is attached at N189. The next 3 membrane-spanning stretches (helical) occupy residues 194-214, 233-253, and 261-281; these read WIFY…GLFL, WGGS…LSWG, and GWQT…FFAY. N299 carries N-linked (GlcNAc...) asparagine glycosylation. The next 6 helical transmembrane spans lie at 305 to 325, 340 to 360, 368 to 388, 401 to 421, 433 to 453, and 509 to 529; these read LLVI…FLPV, VMLF…GITI, VWHF…TLLD, ILFG…ILAS, AWTF…AAVF, and KVVW…CFFV. A glycan (N-linked (GlcNAc...) asparagine) is linked at N553.

This sequence belongs to the major facilitator superfamily. TCR/Tet family.

It is found in the membrane. In terms of biological role, efflux pump; part of the gene cluster that mediates the biosynthesis of the mycotoxin fusarin C. Within the cluster, FUS1, FUS2, FUS8 and FUS9 are sufficient for fusarin production. The other FUS cluster members are not essential for fusarin C biosynthesis. This Gibberella moniliformis (strain M3125 / FGSC 7600) (Maize ear and stalk rot fungus) protein is Efflux pump FUS6.